The chain runs to 71 residues: Disintegrin horridistatin-2 (71 aa).

The Disintegrin domain maps to 1–71 (GEECDCGSPA…ADCPRNGLYG (71 aa)). 6 cysteine pairs are disulfide-bonded: Cys4–Cys19, Cys6–Cys14, Cys13–Cys36, Cys27–Cys33, Cys32–Cys57, and Cys45–Cys64. A Cell attachment site motif is present at residues 49–51 (RGD).

The protein belongs to the venom metalloproteinase (M12B) family. P-II subfamily. P-IIa sub-subfamily. Monomer (disintegrin). Expressed by the venom gland.

The protein localises to the secreted. Inhibits ADP-induced platelet aggregation (IC(50) is 16.2 nM) by binding to alpha-IIb/beta-3 (ITGA2B/ITGB3). The protein is Disintegrin horridistatin-2 of Crotalus horridus (Timber rattlesnake).